We begin with the raw amino-acid sequence, 479 residues long: Ribosomal RNA small subunit methyltransferase F (479 aa).

S-adenosyl-L-methionine contacts are provided by residues 125 to 131 (AAAPGSK), Glu-149, Asp-176, and Asp-194. Cys-247 acts as the Nucleophile in catalysis.

This sequence belongs to the class I-like SAM-binding methyltransferase superfamily. RsmB/NOP family.

It localises to the cytoplasm. It catalyses the reaction cytidine(1407) in 16S rRNA + S-adenosyl-L-methionine = 5-methylcytidine(1407) in 16S rRNA + S-adenosyl-L-homocysteine + H(+). Specifically methylates the cytosine at position 1407 (m5C1407) of 16S rRNA. The protein is Ribosomal RNA small subunit methyltransferase F of Shigella boydii serotype 4 (strain Sb227).